The chain runs to 89 residues: Small ribosomal subunit protein uS17 (89 aa).

It belongs to the universal ribosomal protein uS17 family. Part of the 30S ribosomal subunit.

One of the primary rRNA binding proteins, it binds specifically to the 5'-end of 16S ribosomal RNA. The polypeptide is Small ribosomal subunit protein uS17 (Leptospira borgpetersenii serovar Hardjo-bovis (strain JB197)).